Here is a 429-residue protein sequence, read N- to C-terminus: MKFTESEKLQKLSDEYILGGVNSPSRSYKAVGGGAPVMMRSGKGAYLYDVDGNKYIDYLQAYGPIITGHAHPHITEAIQEQAALGILYGTPTELEIEFAKKLRDAIPSLEKIRFVNSGTEAVMTTIRVARAYTKRNKIVKFAGQYHGHSDLVLVAAGSGPSQLGSPDSAGVPLSVAQEVITVPYNDIDAYKEAIDYWGDEIAAVLVEPIVGNFGMVEPKQGFLEQVNEITHNNGSLVIYDEVITAFRFHYGGAQDLYKVYPDLTAFGKIIGGGLPIGGYGGKQEIMEQVAPLGPAYQAGTMAGNPLSMKGGIALLEVLEQDGVYEQLDALGKRLEDGLLSLINKHNITATVNRVYGALTLYFTNETVVHYDQAENSDGEAFAKFFKLMLNQGINLAPSKFEAWFLTTEHTEEDIDSTLKAVDYAFSQMK.

The residue at position 268 (K268) is an N6-(pyridoxal phosphate)lysine.

The protein belongs to the class-III pyridoxal-phosphate-dependent aminotransferase family. HemL subfamily. As to quaternary structure, homodimer. Pyridoxal 5'-phosphate is required as a cofactor.

Its subcellular location is the cytoplasm. It catalyses the reaction (S)-4-amino-5-oxopentanoate = 5-aminolevulinate. It participates in porphyrin-containing compound metabolism; protoporphyrin-IX biosynthesis; 5-aminolevulinate from L-glutamyl-tRNA(Glu): step 2/2. In Staphylococcus saprophyticus subsp. saprophyticus (strain ATCC 15305 / DSM 20229 / NCIMB 8711 / NCTC 7292 / S-41), this protein is Glutamate-1-semialdehyde 2,1-aminomutase 1.